The primary structure comprises 174 residues: Crossover junction endodeoxyribonuclease RuvC (174 aa).

Residues Asp-8, Glu-67, and Asp-139 contribute to the active site. Positions 8, 67, and 139 each coordinate Mg(2+).

This sequence belongs to the RuvC family. In terms of assembly, homodimer which binds Holliday junction (HJ) DNA. The HJ becomes 2-fold symmetrical on binding to RuvC with unstacked arms; it has a different conformation from HJ DNA in complex with RuvA. In the full resolvosome a probable DNA-RuvA(4)-RuvB(12)-RuvC(2) complex forms which resolves the HJ. Mg(2+) serves as cofactor.

It is found in the cytoplasm. The catalysed reaction is Endonucleolytic cleavage at a junction such as a reciprocal single-stranded crossover between two homologous DNA duplexes (Holliday junction).. In terms of biological role, the RuvA-RuvB-RuvC complex processes Holliday junction (HJ) DNA during genetic recombination and DNA repair. Endonuclease that resolves HJ intermediates. Cleaves cruciform DNA by making single-stranded nicks across the HJ at symmetrical positions within the homologous arms, yielding a 5'-phosphate and a 3'-hydroxyl group; requires a central core of homology in the junction. The consensus cleavage sequence is 5'-(A/T)TT(C/G)-3'. Cleavage occurs on the 3'-side of the TT dinucleotide at the point of strand exchange. HJ branch migration catalyzed by RuvA-RuvB allows RuvC to scan DNA until it finds its consensus sequence, where it cleaves and resolves the cruciform DNA. In Pseudomonas aeruginosa (strain LESB58), this protein is Crossover junction endodeoxyribonuclease RuvC.